Here is a 199-residue protein sequence, read N- to C-terminus: dITP/XTP pyrophosphatase (199 aa).

Substrate is bound at residue 7-12 (SANKGK). 2 residues coordinate Mg(2+): aspartate 38 and aspartate 73. Residue aspartate 73 is the Proton acceptor of the active site. Substrate is bound by residues serine 74, 155 to 158 (FGYD), lysine 178, and 183 to 184 (HR).

It belongs to the HAM1 NTPase family. In terms of assembly, homodimer. It depends on Mg(2+) as a cofactor.

It catalyses the reaction XTP + H2O = XMP + diphosphate + H(+). It carries out the reaction dITP + H2O = dIMP + diphosphate + H(+). The catalysed reaction is ITP + H2O = IMP + diphosphate + H(+). Functionally, pyrophosphatase that catalyzes the hydrolysis of nucleoside triphosphates to their monophosphate derivatives, with a high preference for the non-canonical purine nucleotides XTP (xanthosine triphosphate), dITP (deoxyinosine triphosphate) and ITP. Seems to function as a house-cleaning enzyme that removes non-canonical purine nucleotides from the nucleotide pool, thus preventing their incorporation into DNA/RNA and avoiding chromosomal lesions. The polypeptide is dITP/XTP pyrophosphatase (Aliarcobacter butzleri (strain RM4018) (Arcobacter butzleri)).